Reading from the N-terminus, the 143-residue chain is Transcriptional regulator MraZ (143 aa).

2 SpoVT-AbrB domains span residues 5-47 (EFRH…PMKE) and 76-119 (ATEC…DEAR).

Belongs to the MraZ family. Forms oligomers.

Its subcellular location is the cytoplasm. The protein localises to the nucleoid. In Enterococcus hirae, this protein is Transcriptional regulator MraZ.